The primary structure comprises 578 residues: Adenine deaminase (578 aa).

Belongs to the metallo-dependent hydrolases superfamily. Adenine deaminase family. Mn(2+) serves as cofactor.

It carries out the reaction adenine + H2O + H(+) = hypoxanthine + NH4(+). In Ligilactobacillus salivarius (strain UCC118) (Lactobacillus salivarius), this protein is Adenine deaminase.